Reading from the N-terminus, the 268-residue chain is Peptide transport system ATP-binding protein SapF (268 aa).

Residues 6–251 form the ABC transporter domain; it reads LEVRNLSKTF…PLHELTRRLI (246 aa). 47–54 is a binding site for ATP; that stretch reads GENGSGKS.

Belongs to the ABC transporter superfamily.

The protein resides in the cell inner membrane. Functionally, involved in a peptide intake transport system that plays a role in the resistance to antimicrobial peptides. This chain is Peptide transport system ATP-binding protein SapF, found in Salmonella typhimurium (strain LT2 / SGSC1412 / ATCC 700720).